A 318-amino-acid chain; its full sequence is Malate dehydrogenase (318 aa).

Residues 10-15 (GGGQIG) and Asp-34 each bind NAD(+). Residues Arg-83 and Arg-89 each contribute to the substrate site. Residues Asn-96 and 119-121 (ISN) each bind NAD(+). Substrate-binding residues include Asn-121 and Arg-152. His-176 (proton acceptor) is an active-site residue.

Belongs to the LDH/MDH superfamily. MDH type 3 family.

It carries out the reaction (S)-malate + NAD(+) = oxaloacetate + NADH + H(+). Catalyzes the reversible oxidation of malate to oxaloacetate. The polypeptide is Malate dehydrogenase (Geotalea uraniireducens (strain Rf4) (Geobacter uraniireducens)).